We begin with the raw amino-acid sequence, 977 residues long: Ephrin type-A receptor 2 (977 aa).

An N-terminal signal peptide occupies residues 1-25; the sequence is MELRAVGFCLALLWGCALAAAAAQG. The tract at residues 1–205 is mediates interaction with CLDN4; the sequence is MELRAVGFCL…YYKKCPEMLQ (205 aa). Topologically, residues 26–538 are extracellular; it reads KEVVLLDFAA…STEGSANMAV (513 aa). Residues 27–205 form the Eph LBD domain; it reads EVVLLDFAAM…YYKKCPEMLQ (179 aa). 2 disulfides stabilise this stretch: C69-C187 and C104-C114. A Fibronectin type-III 1 domain is found at 329–433; sequence PPSAPNYLTA…TSRSFRTASV (105 aa). N-linked (GlcNAc...) asparagine glycans are attached at residues N408 and N436. Residues 439-530 enclose the Fibronectin type-III 2 domain; sequence EPPKVRLEDR…KVHEFQTLST (92 aa). Residues 539-559 traverse the membrane as a helical segment; sequence IGGVAVGVVLLLVLAGVGLFI. The Cytoplasmic portion of the chain corresponds to 560-977; the sequence is HRRRRNLRAR…DQVNTVGIPI (418 aa). Phosphoserine occurs at positions 571 and 580. Y589 and Y595 each carry phosphotyrosine; by autocatalysis. A mediates interaction with ARHGEF16 region spans residues 607 to 907; it reads TEIHPSCVAR…STSGSEGVPF (301 aa). Residues 614 to 876 enclose the Protein kinase domain; that stretch reads VARQKVIGAG…DIVSILDKLI (263 aa). 620 to 628 contacts ATP; it reads IGAGEFGEV. The residue at position 629 (Y629) is a Phosphotyrosine. K647 is an ATP binding site. The residue at position 648 (T648) is a Phosphothreonine. Residue Y736 is modified to Phosphotyrosine; by autocatalysis. The Proton acceptor role is filled by D740. Y773 is modified (phosphotyrosine; by autocatalysis). Phosphoserine occurs at positions 870, 893, 898, and 902. The negatively regulates interaction with ARHGEF16 stretch occupies residues 887-977; sequence DFDPRVSIRL…DQVNTVGIPI (91 aa). One can recognise an SAM domain in the interval 905–969; the sequence is VPFRTVSEWL…AYSLLGLKDQ (65 aa). At Y922 the chain carries Phosphotyrosine; by autocatalysis. The residue at position 931 (Y931) is a Phosphotyrosine. A PDZ-binding motif is present at residues 975–977; sequence IPI.

Belongs to the protein kinase superfamily. Tyr protein kinase family. Ephrin receptor subfamily. As to quaternary structure, homodimer. Interacts with INPPL1; regulates activated EPHA2 endocytosis and degradation. Interacts (inactivated form) with PTK2/FAK1 and interacts (EFNA1 ligand-activated form) with PTPN11; regulates integrin-mediated adhesion. Interacts with ARHGEF16, DOCK4 and ELMO2; mediates ligand-independent activation of RAC1 which stimulates cell migration. Interacts with CLDN4; phosphorylates CLDN4 and may regulate tight junctions. Interacts with ACP1. Interacts with CEMIP. Interacts with NCK1; may regulate EPHA2 activity in cell migration and adhesion. Interacts with SLA. Interacts (phosphorylated form) with VAV2, VAV3 and PI3-kinase p85 subunit (PIK3R1, PIK3R2 or PIK3R3); critical for the EFNA1-induced activation of RAC1 which stimulates cell migration. Interacts with ANKS1A. Interacts with TIMD4. Autophosphorylates. Phosphorylated at Ser-898 by PKB; serum-induced phosphorylation which targets EPHA2 to the cell leading edge and stimulates cell migration. Phosphorylation by PKB is inhibited by EFNA1-activated EPHA2 which regulates PKB activity via a reciprocal regulatory loop. Phosphorylated on tyrosine upon binding and activation by EFNA1. Phosphorylated residues Tyr-589 and Tyr-595 are required for binding VAV2 and VAV3 while phosphorylated residues Tyr-736 and Tyr-931 are required for binding PI3-kinase p85 subunit (PIK3R1, PIK3R2 or PIK3R3). These phosphorylated residues are critical for recruitment of VAV2 and VAV3 and PI3-kinase p85 subunit which transduce downstream signaling to activate RAC1 GTPase and cell migration. Dephosphorylation of Tyr-931 by PTPRF prevents the interaction of EPHA2 with NCK1. Phosphorylated at Ser-898 in response to TNF by RPS6KA1 and RPS6KA3; RPS6KA-EPHA2 signaling pathway controls cell migration. Phosphorylated at Ser-898 by PKA; blocks cell retraction induced by EPHA2 kinase activity. Dephosphorylated by ACP1. In terms of processing, ubiquitinated by CHIP/STUB1. Ubiquitination is regulated by the HSP90 chaperone and regulates the receptor stability and activity through proteasomal degradation. ANKS1A prevents ubiquitination and degradation. As to expression, expressed in the lung, intestine and liver. Expressed in myogenic progenitor cells.

It localises to the cell membrane. Its subcellular location is the cell projection. The protein resides in the ruffle membrane. It is found in the lamellipodium membrane. The protein localises to the cell junction. It localises to the focal adhesion. The catalysed reaction is L-tyrosyl-[protein] + ATP = O-phospho-L-tyrosyl-[protein] + ADP + H(+). In terms of biological role, receptor tyrosine kinase which binds promiscuously membrane-bound ephrin-A family ligands residing on adjacent cells, leading to contact-dependent bidirectional signaling into neighboring cells. The signaling pathway downstream of the receptor is referred to as forward signaling while the signaling pathway downstream of the ephrin ligand is referred to as reverse signaling. Activated by the ligand ephrin-A1/EFNA1 regulates migration, integrin-mediated adhesion, proliferation and differentiation of cells. Regulates cell adhesion and differentiation through DSG1/desmoglein-1 and inhibition of the ERK1/ERK2 signaling pathway. May also participate in UV radiation-induced apoptosis and have a ligand-independent stimulatory effect on chemotactic cell migration. During development, may function in distinctive aspects of pattern formation and subsequently in development of several fetal tissues. Involved for instance in angiogenesis, in early hindbrain development and epithelial proliferation and branching morphogenesis during mammary gland development. Engaged by the ligand ephrin-A5/EFNA5 may regulate lens fiber cells shape and interactions and be important for lens transparency development and maintenance. With ephrin-A2/EFNA2 may play a role in bone remodeling through regulation of osteoclastogenesis and osteoblastogenesis. In Mus musculus (Mouse), this protein is Ephrin type-A receptor 2 (Epha2).